We begin with the raw amino-acid sequence, 192 residues long: Inosine triphosphate pyrophosphatase (192 aa).

8–13 (TTNLKK) lines the ITP pocket. Mg(2+) is bound at residue glutamate 34. ITP-binding positions include lysine 46, 64-65 (DT), lysine 81, 141-144 (EGFD), lysine 164, and 169-170 (HR).

Belongs to the HAM1 NTPase family. As to quaternary structure, homodimer. Mg(2+) serves as cofactor. It depends on Mn(2+) as a cofactor.

It is found in the cytoplasm. The protein localises to the nucleus. It carries out the reaction ITP + H2O = IMP + diphosphate + H(+). The enzyme catalyses dITP + H2O = dIMP + diphosphate + H(+). The catalysed reaction is XTP + H2O = XMP + diphosphate + H(+). In terms of biological role, pyrophosphatase that hydrolyzes non-canonical purine nucleotides such as inosine triphosphate (ITP), deoxyinosine triphosphate (dITP) or xanthosine 5'-triphosphate (XTP) to their respective monophosphate derivatives. The enzyme does not distinguish between the deoxy- and ribose forms. Probably excludes non-canonical purines from RNA and DNA precursor pools, thus preventing their incorporation into RNA and DNA and avoiding chromosomal lesions. This is Inosine triphosphate pyrophosphatase from Encephalitozoon cuniculi (strain GB-M1) (Microsporidian parasite).